Consider the following 414-residue polypeptide: TAR DNA-binding protein 43 (414 aa).

2 consecutive RRM domains span residues 104–200 (SDLI…RCTE) and 191–262 (RKVF…NAEP). Basic and acidic residues predominate over residues 261-274 (EPKHNSNRQLERGG). 2 disordered regions span residues 261 to 303 (EPKH…GNNQ) and 341 to 373 (ASQQ…GNNS). Over residues 275-303 (RFGGNPGGFGNQGGFGNSRGGGGGLGNNQ) the composition is skewed to gly residues. A compositionally biased stretch (low complexity) spans 342–373 (SQQNQSGPSGNNQPQGNMQREQNQGFSSGNNS).

Homodimer.

Its subcellular location is the nucleus. It localises to the cytoplasm. The protein resides in the stress granule. It is found in the mitochondrion. Its function is as follows. Probably involved in transcriptional repression. May play a role in the maintenance of the circadian clock periodicity. The protein is TAR DNA-binding protein 43 (TARDBP) of Gallus gallus (Chicken).